Here is a 734-residue protein sequence, read N- to C-terminus: 1,4-alpha-glucan branching enzyme GlgB (734 aa).

Asp413 acts as the Nucleophile in catalysis. Glu466 (proton donor) is an active-site residue.

It belongs to the glycosyl hydrolase 13 family. GlgB subfamily. Monomer.

It catalyses the reaction Transfers a segment of a (1-&gt;4)-alpha-D-glucan chain to a primary hydroxy group in a similar glucan chain.. It functions in the pathway glycan biosynthesis; glycogen biosynthesis. Functionally, catalyzes the formation of the alpha-1,6-glucosidic linkages in glycogen by scission of a 1,4-alpha-linked oligosaccharide from growing alpha-1,4-glucan chains and the subsequent attachment of the oligosaccharide to the alpha-1,6 position. The chain is 1,4-alpha-glucan branching enzyme GlgB from Nitrosomonas europaea (strain ATCC 19718 / CIP 103999 / KCTC 2705 / NBRC 14298).